Consider the following 395-residue polypeptide: Dihydroorotate dehydrogenase (quinone), mitochondrial (395 aa).

A mitochondrion; not cleaved-targeting transit peptide spans 1–10; it reads MAWRQLKKRA. Over 1–10 the chain is Mitochondrial matrix; the sequence is MAWRQLKKRA. Residues 11–30 traverse the membrane as a helical segment; that stretch reads QDAMVILGGGGLLFASYLTA. Residues 31–395 are Mitochondrial intermembrane-facing; that stretch reads TGDEHFYAEL…TDAIGADHRR (365 aa). FMN contacts are provided by residues 95–99 and Ser119; that span reads AGFDK. Lys99 contributes to the substrate binding site. 144–148 provides a ligand contact to substrate; it reads NRYGF. The FMN site is built by Asn180 and Asn211. 211-216 is a substrate binding site; the sequence is NVSSPN. Catalysis depends on Ser214, which acts as the Nucleophile. FMN-binding residues include Lys254 and Thr282. 283–284 contributes to the substrate binding site; sequence NS. Residues Gly305, Gly334, and 355–356 each bind FMN; that span reads YT.

Belongs to the dihydroorotate dehydrogenase family. Type 2 subfamily. As to quaternary structure, monomer. The cofactor is FMN. The uncleaved transit peptide is required for mitochondrial targeting and proper membrane integration.

Its subcellular location is the mitochondrion inner membrane. The catalysed reaction is (S)-dihydroorotate + a quinone = orotate + a quinol. Its pathway is pyrimidine metabolism; UMP biosynthesis via de novo pathway; orotate from (S)-dihydroorotate (quinone route): step 1/1. In terms of biological role, catalyzes the conversion of dihydroorotate to orotate with quinone as electron acceptor. Required for UMP biosynthesis via de novo pathway. This chain is Dihydroorotate dehydrogenase (quinone), mitochondrial (DHODH), found in Bos taurus (Bovine).